The following is a 279-amino-acid chain: NAD kinase (279 aa).

Asp-63 acts as the Proton acceptor in catalysis. NAD(+) is bound by residues 63-64 (DG), Arg-68, 133-134 (NE), and Asp-163.

This sequence belongs to the NAD kinase family. Requires a divalent metal cation as cofactor.

Its subcellular location is the cytoplasm. The enzyme catalyses NAD(+) + ATP = ADP + NADP(+) + H(+). Its function is as follows. Involved in the regulation of the intracellular balance of NAD and NADP, and is a key enzyme in the biosynthesis of NADP. Catalyzes specifically the phosphorylation on 2'-hydroxyl of the adenosine moiety of NAD to yield NADP. The chain is NAD kinase from Protochlamydia amoebophila (strain UWE25).